The chain runs to 367 residues: 5-amino-6-(D-ribitylamino)uracil--L-tyrosine 4-hydroxyphenyl transferase (367 aa).

The Radical SAM core domain occupies 56 to 290; that stretch reads VTYVRNQNIN…MFAVARLFLD (235 aa). Positions 70, 74, and 77 each coordinate [4Fe-4S] cluster.

It belongs to the radical SAM superfamily. CofH family. In terms of assembly, consists of two subunits, CofG and CofH. [4Fe-4S] cluster serves as cofactor.

The enzyme catalyses 5-amino-6-(D-ribitylamino)uracil + L-tyrosine + S-adenosyl-L-methionine = 5-amino-5-(4-hydroxybenzyl)-6-(D-ribitylimino)-5,6-dihydrouracil + 2-iminoacetate + 5'-deoxyadenosine + L-methionine + H(+). It participates in cofactor biosynthesis; coenzyme F0 biosynthesis. Functionally, catalyzes the radical-mediated synthesis of 5-amino-5-(4-hydroxybenzyl)-6-(D-ribitylimino)-5,6-dihydrouracil from 5-amino-6-(D-ribitylamino)uracil and L-tyrosine. This is 5-amino-6-(D-ribitylamino)uracil--L-tyrosine 4-hydroxyphenyl transferase from Methanoculleus marisnigri (strain ATCC 35101 / DSM 1498 / JR1).